The sequence spans 319 residues: MGQGLWRVARNHHLQQEAYSETGYLSREQSRRVASSNISHTSHRKQAQGGIDIYHLLKARKSKEQEGFINLEMLPPELSFTILSYLNATDLCLASCVWQDLANDELLWQGLCKSTWGHCSIYNKNPPLGFSFRKLYMQLDEGSLTFNANPEEGVSYFMSKGILDDSPKEIAKFIFCTRTLNWKKLRIYLDERRDVLDDLVTLHNFRNQFLPNALREFFRHIHAPEERGEYLETLITKFSHRFCACNPDLMRELGLSPDAVYVLCYSLILLSIDLTSPHVKNKMSKREFIRNTRRAAQNISEDFVGHLYDNIYLIGHVAA.

An F-box domain is found at 68–111; the sequence is FINLEMLPPELSFTILSYLNATDLCLASCVWQDLANDELLWQGL. The region spanning 146–276 is the SEC7 domain; that stretch reads FNANPEEGVS…LILLSIDLTS (131 aa).

As to expression, high expression in brain, heart, kidney, liver, lung, skeletal muscle, testis, and day-7 embryos.

May promote guanine-nucleotide exchange on an ARF. Promotes the activation of ARF through replacement of GDP with GTP (Potential). This chain is F-box only protein 8 (Fbxo8), found in Mus musculus (Mouse).